Consider the following 163-residue polypeptide: Crossover junction endodeoxyribonuclease RuvC (163 aa).

Catalysis depends on residues D9, E76, and D148. 3 residues coordinate Mg(2+): D9, E76, and D148.

The protein belongs to the RuvC family. Homodimer which binds Holliday junction (HJ) DNA. The HJ becomes 2-fold symmetrical on binding to RuvC with unstacked arms; it has a different conformation from HJ DNA in complex with RuvA. In the full resolvosome a probable DNA-RuvA(4)-RuvB(12)-RuvC(2) complex forms which resolves the HJ. It depends on Mg(2+) as a cofactor.

It is found in the cytoplasm. It catalyses the reaction Endonucleolytic cleavage at a junction such as a reciprocal single-stranded crossover between two homologous DNA duplexes (Holliday junction).. Its function is as follows. The RuvA-RuvB-RuvC complex processes Holliday junction (HJ) DNA during genetic recombination and DNA repair. Endonuclease that resolves HJ intermediates. Cleaves cruciform DNA by making single-stranded nicks across the HJ at symmetrical positions within the homologous arms, yielding a 5'-phosphate and a 3'-hydroxyl group; requires a central core of homology in the junction. The consensus cleavage sequence is 5'-(A/T)TT(C/G)-3'. Cleavage occurs on the 3'-side of the TT dinucleotide at the point of strand exchange. HJ branch migration catalyzed by RuvA-RuvB allows RuvC to scan DNA until it finds its consensus sequence, where it cleaves and resolves the cruciform DNA. The protein is Crossover junction endodeoxyribonuclease RuvC of Trichormus variabilis (strain ATCC 29413 / PCC 7937) (Anabaena variabilis).